Reading from the N-terminus, the 1093-residue chain is Atos homolog protein A (1093 aa).

Residues 29–37 are transactivation domain 1 (TAD1); that stretch reads ALLITEGRT. Disordered regions lie at residues 396-479, 558-579, and 746-788; these read AGRP…GNPL, SSKS…GESK, and HDNF…GSMR. Over residues 746 to 763 the composition is skewed to basic and acidic residues; the sequence is HDNFKNKNRQDKTKAAHD. Residues 895–952 are required for macropage invasion; that stretch reads LLGNFEESVLNFRLDPLGIVEGFTAEVGASGVFCPTHMTLPVEVSFYSVSDDNAPSPY. The tract at residues 979–987 is transactivation domain 2 (TAD2); the sequence is FNPNKTVVK.

This sequence belongs to the ATOS family.

The protein resides in the nucleus. Transcription regulator that syncronizes transcriptional and translational programs to promote macrophage invasion of tissues. In Gallus gallus (Chicken), this protein is Atos homolog protein A (ATOSA).